We begin with the raw amino-acid sequence, 537 residues long: CTP synthase (537 aa).

The tract at residues 1–265 is amidoligase domain; the sequence is MVHFIFVTGG…DNKVLKFFNI (265 aa). CTP is bound at residue Ser-13. Ser-13 is a UTP binding site. Residues 14 to 19 and Asp-71 each bind ATP; that span reads SLGKGL. Asp-71 and Glu-139 together coordinate Mg(2+). Residues 146 to 148 and Lys-222 contribute to the CTP site; that span reads DIE. Lys-222 is a UTP binding site. Residues 290–536 enclose the Glutamine amidotransferase type-1 domain; sequence RIAIIAKYHK…IKAAIEYNKC (247 aa). Gly-352 is an L-glutamine binding site. Residue Cys-379 is the Nucleophile; for glutamine hydrolysis of the active site. Residues 380-383, Glu-403, and Arg-464 each bind L-glutamine; that span reads FGMQ. Residues His-509 and Glu-511 contribute to the active site.

This sequence belongs to the CTP synthase family. In terms of assembly, homotetramer.

It carries out the reaction UTP + L-glutamine + ATP + H2O = CTP + L-glutamate + ADP + phosphate + 2 H(+). It catalyses the reaction L-glutamine + H2O = L-glutamate + NH4(+). The enzyme catalyses UTP + NH4(+) + ATP = CTP + ADP + phosphate + 2 H(+). It functions in the pathway pyrimidine metabolism; CTP biosynthesis via de novo pathway; CTP from UDP: step 2/2. Its activity is regulated as follows. Allosterically activated by GTP, when glutamine is the substrate; GTP has no effect on the reaction when ammonia is the substrate. The allosteric effector GTP functions by stabilizing the protein conformation that binds the tetrahedral intermediate(s) formed during glutamine hydrolysis. Inhibited by the product CTP, via allosteric rather than competitive inhibition. Its function is as follows. Catalyzes the ATP-dependent amination of UTP to CTP with either L-glutamine or ammonia as the source of nitrogen. Regulates intracellular CTP levels through interactions with the four ribonucleotide triphosphates. The protein is CTP synthase of Rickettsia peacockii (strain Rustic).